Reading from the N-terminus, the 57-residue chain is uncharacterized protein (57 aa).

The next 2 membrane-spanning stretches (helical) occupy residues Val-4–Trp-26 and Ala-33–Leu-55.

Its subcellular location is the cell membrane. This is an uncharacterized protein from Methanocaldococcus jannaschii (strain ATCC 43067 / DSM 2661 / JAL-1 / JCM 10045 / NBRC 100440) (Methanococcus jannaschii).